The chain runs to 216 residues: uncharacterized protein (216 aa).

A 4Fe-4S ferredoxin-type domain is found at 18-47 (PPDSPIEDRCGSCNICVDSCPTGALVQGGQ). Residues Cys-27, Cys-30, Cys-33, Cys-37, Cys-79, Cys-82, and Cys-86 each contribute to the [4Fe-4S] cluster site.

This is an uncharacterized protein from Geobacillus stearothermophilus (Bacillus stearothermophilus).